Reading from the N-terminus, the 976-residue chain is Villin-2 (976 aa).

Gelsolin-like repeat units lie at residues 27–77 (FEAV…DEAG), 148–188 (IRLK…QERA), 260–302 (GKME…DERK), 399–450 (GKVK…EDQD), 531–571 (NKAV…EQLE), and 633–674 (FQVE…KEKQ). The disordered stretch occupies residues 769 to 917 (NSSSNRPAYS…SEIQPSGATF (149 aa)). Positions 782 to 794 (RLNESHDGPRQRA) are enriched in basic and acidic residues. Composition is skewed to low complexity over residues 795 to 812 (EALA…SSTK), 823 to 841 (SQAS…VLVA), and 848 to 858 (DTSPTRRSTSS). Ser890 carries the phosphoserine modification. The span at 908 to 917 (SEIQPSGATF) shows a compositional bias: polar residues. The region spanning 911 to 976 (QPSGATFTYE…DLLKKKFDLF (66 aa)) is the HP domain.

Belongs to the villin/gelsolin family. Expressed in all tissues examined. Mainly detected in the root epidermis and vasculature. Expressed in the root cap.

The protein resides in the cytoplasm. Its subcellular location is the cytoskeleton. Its function is as follows. Ca(2+)-regulated actin-binding protein. Involved in actin filaments bundling. Caps the barbed end of actin filaments and is able to sever them in a calcium-dependent manner. Required for the construction of actin collars in pollen tubes. Acts redundantly with VLN5 (AC Q9LVC6) to generate thick actin filament bundles and to regulate polarized pollen tube growth. Acts redundantly with VLN3 (AC O81645) to regulate directional organ growth and in sclerenchyma development. This chain is Villin-2, found in Arabidopsis thaliana (Mouse-ear cress).